The following is a 127-amino-acid chain: MRPPLLLFLTVTVLVSCASAVSTGNAAELRSLRSIKTTTNDDAAEEERGGFYHKFDLNFLDDIFHGLPEQFQRMRNQPERLRTMFENWKTGWMSVDDAVAYMTREGLSEKAISQFKAAYQAYLKHKG.

Residues 1 to 20 (MRPPLLLFLTVTVLVSCASA) form the signal peptide. A RxLR-dEER motif is present at residues 30 to 48 (RSLRSIKTTTNDDAAEEER).

Belongs to the RxLR effector family.

It localises to the secreted. It is found in the host cell. Its function is as follows. Secreted effector that partially suppresses elicitor-induced cell death in host and enhances virulence of P.parasitica. The sequence is that of Secreted RxLR effector protein 3 from Phytophthora nicotianae (Potato buckeye rot agent).